A 407-amino-acid chain; its full sequence is Imidazolonepropionase (407 aa).

Residues histidine 74 and histidine 76 each coordinate Fe(3+). Residues histidine 74 and histidine 76 each contribute to the Zn(2+) site. Positions 83, 146, and 179 each coordinate 4-imidazolone-5-propanoate. Residue tyrosine 146 participates in N-formimidoyl-L-glutamate binding. Histidine 244 is a Fe(3+) binding site. Histidine 244 contacts Zn(2+). Residue glutamine 247 coordinates 4-imidazolone-5-propanoate. Aspartate 319 provides a ligand contact to Fe(3+). Aspartate 319 contacts Zn(2+). N-formimidoyl-L-glutamate-binding residues include asparagine 321 and glycine 323. Threonine 324 provides a ligand contact to 4-imidazolone-5-propanoate.

Belongs to the metallo-dependent hydrolases superfamily. HutI family. The cofactor is Zn(2+). Fe(3+) serves as cofactor.

It localises to the cytoplasm. It carries out the reaction 4-imidazolone-5-propanoate + H2O = N-formimidoyl-L-glutamate. Its pathway is amino-acid degradation; L-histidine degradation into L-glutamate; N-formimidoyl-L-glutamate from L-histidine: step 3/3. Its function is as follows. Catalyzes the hydrolytic cleavage of the carbon-nitrogen bond in imidazolone-5-propanoate to yield N-formimidoyl-L-glutamate. It is the third step in the universal histidine degradation pathway. This Salmonella schwarzengrund (strain CVM19633) protein is Imidazolonepropionase.